The following is a 129-amino-acid chain: Phosphoribosyl-AMP cyclohydrolase (129 aa).

Residue Asp-85 coordinates Mg(2+). Cys-86 serves as a coordination point for Zn(2+). Mg(2+)-binding residues include Asp-87 and Asp-89. Zn(2+) is bound by residues Cys-102 and Cys-109.

It belongs to the PRA-CH family. In terms of assembly, homodimer. Requires Mg(2+) as cofactor. It depends on Zn(2+) as a cofactor.

It is found in the cytoplasm. It carries out the reaction 1-(5-phospho-beta-D-ribosyl)-5'-AMP + H2O = 1-(5-phospho-beta-D-ribosyl)-5-[(5-phospho-beta-D-ribosylamino)methylideneamino]imidazole-4-carboxamide. It participates in amino-acid biosynthesis; L-histidine biosynthesis; L-histidine from 5-phospho-alpha-D-ribose 1-diphosphate: step 3/9. In terms of biological role, catalyzes the hydrolysis of the adenine ring of phosphoribosyl-AMP. This Methanococcus maripaludis (strain C5 / ATCC BAA-1333) protein is Phosphoribosyl-AMP cyclohydrolase.